A 495-amino-acid polypeptide reads, in one-letter code: uncharacterized protein (495 aa).

The signal sequence occupies residues 1–17; sequence MRTLSLLILFLSTFLFA.

This is an uncharacterized protein from Aquifex aeolicus (strain VF5).